The primary structure comprises 142 residues: Large ribosomal subunit protein uL13 (142 aa).

The protein belongs to the universal ribosomal protein uL13 family. Part of the 50S ribosomal subunit.

In terms of biological role, this protein is one of the early assembly proteins of the 50S ribosomal subunit, although it is not seen to bind rRNA by itself. It is important during the early stages of 50S assembly. In Hamiltonella defensa subsp. Acyrthosiphon pisum (strain 5AT), this protein is Large ribosomal subunit protein uL13.